Reading from the N-terminus, the 358-residue chain is Methylthioribose-1-phosphate isomerase (358 aa).

Substrate contacts are provided by residues 54–56 (RGA), Arg96, and Gln205. The active-site Proton donor is Asp246. 256–257 (SK) lines the substrate pocket.

This sequence belongs to the eIF-2B alpha/beta/delta subunits family. MtnA subfamily.

It carries out the reaction 5-(methylsulfanyl)-alpha-D-ribose 1-phosphate = 5-(methylsulfanyl)-D-ribulose 1-phosphate. The protein operates within amino-acid biosynthesis; L-methionine biosynthesis via salvage pathway; L-methionine from S-methyl-5-thio-alpha-D-ribose 1-phosphate: step 1/6. Catalyzes the interconversion of methylthioribose-1-phosphate (MTR-1-P) into methylthioribulose-1-phosphate (MTRu-1-P). The chain is Methylthioribose-1-phosphate isomerase from Pseudomonas putida (strain GB-1).